A 563-amino-acid chain; its full sequence is Arginine--tRNA ligase (563 aa).

Positions Ala119–Arg129 match the 'HIGH' region motif.

It belongs to the class-I aminoacyl-tRNA synthetase family.

It is found in the cytoplasm. It catalyses the reaction tRNA(Arg) + L-arginine + ATP = L-arginyl-tRNA(Arg) + AMP + diphosphate. This Methanocella arvoryzae (strain DSM 22066 / NBRC 105507 / MRE50) protein is Arginine--tRNA ligase.